The following is a 283-amino-acid chain: Extracellular metalloprotease MGG_08041 (283 aa).

The signal sequence occupies residues 1-22; sequence MQINVVKTFLFALAASSVSALA. The N-linked (GlcNAc...) asparagine glycan is linked to asparagine 55. Residue histidine 197 coordinates Zn(2+). Glutamate 198 is a catalytic residue. Histidine 201 is a Zn(2+) binding site. Cysteines 233 and 260 form a disulfide.

Belongs to the peptidase M43B family.

Its subcellular location is the secreted. Its function is as follows. Secreted metalloproteinase that allows assimilation of proteinaceous substrates. The chain is Extracellular metalloprotease MGG_08041 from Pyricularia oryzae (strain 70-15 / ATCC MYA-4617 / FGSC 8958) (Rice blast fungus).